Consider the following 510-residue polypeptide: AAA-ATPase At3g28540 (510 aa).

A helical transmembrane segment spans residues 7-25; sequence LFGFTGTTMASLMFFWSVY. 246-253 provides a ligand contact to ATP; the sequence is GPPGTGKS. Positions 460-510 are disordered; that stretch reads KEKAKKLAEEEKMKKAARDARRIKKKAEEEHKKKNKVEENGDVSHDNGNHI.

Belongs to the AAA ATPase family. BCS1 subfamily. The cofactor is Mg(2+).

Its subcellular location is the membrane. It carries out the reaction ATP + H2O = ADP + phosphate + H(+). This is AAA-ATPase At3g28540 from Arabidopsis thaliana (Mouse-ear cress).